Reading from the N-terminus, the 179-residue chain is Replication restart protein DnaT (179 aa).

Residues 156–179 (GGLPKRDVNTVSEPDSQIPPGFRG) form a disordered region.

It belongs to the DnaT family. Homooligomerizes. Interacts with PriB. Component of the replication restart primosome. Primosome assembly occurs via a 'hand-off' mechanism. PriA binds to replication forks, subsequently PriB then DnaT bind; DnaT then displaces ssDNA to generate the helicase loading substrate.

Functionally, involved in the restart of stalled replication forks, which reloads the replicative helicase on sites other than the origin of replication. Can function in multiple replication restart pathways. Displaces ssDNA from a PriB-ssDNA complex. Probably forms a spiral filament on ssDNA. This is Replication restart protein DnaT from Escherichia coli (strain ATCC 8739 / DSM 1576 / NBRC 3972 / NCIMB 8545 / WDCM 00012 / Crooks).